Here is a 511-residue protein sequence, read N- to C-terminus: Probable cytochrome P450 4d21 (511 aa).

Cys456 contacts heme.

It belongs to the cytochrome P450 family. Requires heme as cofactor.

Its subcellular location is the endoplasmic reticulum membrane. It localises to the microsome membrane. May be involved in the metabolism of insect hormones and in the breakdown of synthetic insecticides. The protein is Probable cytochrome P450 4d21 (Cyp4d21) of Drosophila melanogaster (Fruit fly).